A 211-amino-acid chain; its full sequence is Orotate phosphoribosyltransferase (211 aa).

5-phospho-alpha-D-ribose 1-diphosphate contacts are provided by residues arginine 103, lysine 107, histidine 109, and 129–137; that span reads EDLISTGKS. Residue serine 133 participates in orotate binding.

Belongs to the purine/pyrimidine phosphoribosyltransferase family. PyrE subfamily. As to quaternary structure, homodimer. The cofactor is Mg(2+).

It carries out the reaction orotidine 5'-phosphate + diphosphate = orotate + 5-phospho-alpha-D-ribose 1-diphosphate. It participates in pyrimidine metabolism; UMP biosynthesis via de novo pathway; UMP from orotate: step 1/2. Catalyzes the transfer of a ribosyl phosphate group from 5-phosphoribose 1-diphosphate to orotate, leading to the formation of orotidine monophosphate (OMP). The polypeptide is Orotate phosphoribosyltransferase (Fusobacterium nucleatum subsp. nucleatum (strain ATCC 25586 / DSM 15643 / BCRC 10681 / CIP 101130 / JCM 8532 / KCTC 2640 / LMG 13131 / VPI 4355)).